The following is a 285-amino-acid chain: Hydroxyacylglutathione hydrolase, mitochondrial (285 aa).

Residues 1 to 10 (MKFLLQQIRN) constitute a mitochondrion transit peptide. Histidine 69, histidine 71, aspartate 73, histidine 74, histidine 131, aspartate 154, and histidine 198 together coordinate Zn(2+).

Zn(2+) is required as a cofactor.

It is found in the mitochondrion matrix. It carries out the reaction an S-(2-hydroxyacyl)glutathione + H2O = a 2-hydroxy carboxylate + glutathione + H(+). It catalyses the reaction (R)-S-lactoylglutathione + H2O = (R)-lactate + glutathione + H(+). It participates in secondary metabolite metabolism; methylglyoxal degradation; (R)-lactate from methylglyoxal: step 2/2. Its activity is regulated as follows. Inhibited by various thiol compounds such as glutathione and coenzyme A. Thiolesterase that catalyzes the hydrolysis of S-D-lactoylglutathione to form glutathione and D-lactic acid. Involved in the metabolism of methylglyoxal, a toxic compound for yeast proliferation, by converting methylglyoxal to lactate via S-D-lactoylglutathione by sequential enzyme reactions catalyzed by glyoxalase I and glyoxalase II. The sequence is that of Hydroxyacylglutathione hydrolase, mitochondrial from Saccharomyces cerevisiae (strain ATCC 204508 / S288c) (Baker's yeast).